The chain runs to 146 residues: Snaclec jerdonibitin subunit beta (146 aa).

The signal sequence occupies residues 1-23; sequence MGRFIFVSFGLLVVFLSLSGTGA. Intrachain disulfides connect cysteine 25/cysteine 36, cysteine 53/cysteine 142, and cysteine 119/cysteine 134. The C-type lectin domain maps to 32–143; it reads YEGHCYRVFQ…CSKTYPFVCK (112 aa).

It belongs to the snaclec family. In terms of assembly, heterodimer of subunits alpha and beta; disulfide-linked. As to expression, expressed by the venom gland.

Its subcellular location is the secreted. Snaclec that dose-dependently inhibits platelet aggregation induced by ristocetin or low-dose thrombin, but not by high-dose thrombin. Binds to GPIbalpha (GP1BA). In vivo, also dose-dependently induces thrombocytopenia of mice and platelet counts remains at very low level even after 18 hours intravenous injection. The protein is Snaclec jerdonibitin subunit beta of Protobothrops jerdonii (Jerdon's pitviper).